A 134-amino-acid polypeptide reads, in one-letter code: Large ribosomal subunit protein uL22 (134 aa).

This sequence belongs to the universal ribosomal protein uL22 family. In terms of assembly, part of the 50S ribosomal subunit.

Functionally, this protein binds specifically to 23S rRNA; its binding is stimulated by other ribosomal proteins, e.g. L4, L17, and L20. It is important during the early stages of 50S assembly. It makes multiple contacts with different domains of the 23S rRNA in the assembled 50S subunit and ribosome. The globular domain of the protein is located near the polypeptide exit tunnel on the outside of the subunit, while an extended beta-hairpin is found that lines the wall of the exit tunnel in the center of the 70S ribosome. The polypeptide is Large ribosomal subunit protein uL22 (Porphyromonas gingivalis (strain ATCC 33277 / DSM 20709 / CIP 103683 / JCM 12257 / NCTC 11834 / 2561)).